A 198-amino-acid polypeptide reads, in one-letter code: Ribonuclease HII (198 aa).

Residues 14–198 (GVIAGVDEVG…RNFAPISRAL (185 aa)) enclose the RNase H type-2 domain. Aspartate 20, glutamate 21, and aspartate 112 together coordinate a divalent metal cation.

It belongs to the RNase HII family. Requires Mn(2+) as cofactor. The cofactor is Mg(2+).

The protein resides in the cytoplasm. It carries out the reaction Endonucleolytic cleavage to 5'-phosphomonoester.. In terms of biological role, endonuclease that specifically degrades the RNA of RNA-DNA hybrids. In Wolbachia sp. subsp. Drosophila simulans (strain wRi), this protein is Ribonuclease HII.